The chain runs to 209 residues: Ribosomal RNA large subunit methyltransferase E (209 aa).

The S-adenosyl-L-methionine site is built by Gly63, Trp65, Asp83, Asp99, and Asp124. The active-site Proton acceptor is the Lys164.

It belongs to the class I-like SAM-binding methyltransferase superfamily. RNA methyltransferase RlmE family.

The protein localises to the cytoplasm. It catalyses the reaction uridine(2552) in 23S rRNA + S-adenosyl-L-methionine = 2'-O-methyluridine(2552) in 23S rRNA + S-adenosyl-L-homocysteine + H(+). In terms of biological role, specifically methylates the uridine in position 2552 of 23S rRNA at the 2'-O position of the ribose in the fully assembled 50S ribosomal subunit. This chain is Ribosomal RNA large subunit methyltransferase E, found in Shewanella baltica (strain OS223).